Reading from the N-terminus, the 510-residue chain is Serine/threonine-protein kinase RIO3 (510 aa).

Disordered stretches follow at residues 100 to 126 and 143 to 191; these read GSSS…ENED and DEEN…DMVG. Composition is skewed to basic and acidic residues over residues 108-118 and 162-179; these read TPDRYHPKTMQ and TKHD…KTFN. Residues 235-510 enclose the Protein kinase domain; it reads LLLLKWINQG…RGISPAREYN (276 aa). ATP is bound by residues 241–249 and K275; that span reads INQGVFDSV. D388 functions as the Proton acceptor in the catalytic mechanism. Positions 474–499 are enriched in basic and acidic residues; sequence RSVDLRHDKSRPADMELKKYNEEKKA. The segment at 474 to 510 is disordered; the sequence is RSVDLRHDKSRPADMELKKYNEEKKANRGISPAREYN.

Belongs to the protein kinase superfamily. RIO-type Ser/Thr kinase family. The cofactor is Mg(2+). In terms of tissue distribution, expressed in tail neurons (PVQ and PHAL/PQR).

The catalysed reaction is L-seryl-[protein] + ATP = O-phospho-L-seryl-[protein] + ADP + H(+). The enzyme catalyses L-threonyl-[protein] + ATP = O-phospho-L-threonyl-[protein] + ADP + H(+). This Caenorhabditis elegans protein is Serine/threonine-protein kinase RIO3 (riok-3).